A 723-amino-acid polypeptide reads, in one-letter code: LPS-assembly protein LptD (723 aa).

The signal sequence occupies residues 1-23 (MNTLKLCLILYACLVLLPVRVMS).

This sequence belongs to the LptD family. In terms of assembly, component of the lipopolysaccharide transport and assembly complex. Interacts with LptE and LptA.

It is found in the cell outer membrane. Functionally, together with LptE, is involved in the assembly of lipopolysaccharide (LPS) at the surface of the outer membrane. The sequence is that of LPS-assembly protein LptD from Nitrosomonas europaea (strain ATCC 19718 / CIP 103999 / KCTC 2705 / NBRC 14298).